A 570-amino-acid chain; its full sequence is Small ribosomal subunit protein bS1 (570 aa).

S1 motif domains follow at residues 52 to 116 (GAIL…LSRE), 134 to 199 (GSIV…VSRR), 220 to 288 (GERR…LGLK), 305 to 375 (GKRV…LGLK), 392 to 462 (GLRV…LGVK), and 479 to 548 (GSDI…LSIK).

The protein belongs to the bacterial ribosomal protein bS1 family.

Binds mRNA; thus facilitating recognition of the initiation point. It is needed to translate mRNA with a short Shine-Dalgarno (SD) purine-rich sequence. This Chlamydia muridarum (strain MoPn / Nigg) protein is Small ribosomal subunit protein bS1 (rpsA).